Reading from the N-terminus, the 587-residue chain is Protein IQ-DOMAIN 31 (587 aa).

A disordered region spans residues 57 to 80 (ETNTVDRSGGMLETQNVGPEEISD). At serine 79 the chain carries Phosphoserine. IQ domains follow at residues 112–140 (REIA…GIIR), 141–163 (LQAL…SVMG), and 164–188 (IVRL…VYRK). Positions 149–159 (LVRRQAVATLF) are calmodulin-binding. Residues 176–183 (IRKSDIGV) carry the Nuclear localization signal motif. The disordered stretch occupies residues 344–587 (NPVVESSIQP…AKTTPAERKR (244 aa)). Composition is skewed to basic and acidic residues over residues 357–373 (PRKE…KTRE) and 390–413 (CDEK…EMEV). The span at 424 to 434 (ALDSSLVNQID) shows a compositional bias: polar residues. Basic and acidic residues-rich tracts occupy residues 435 to 472 (SNEK…ENQK) and 482 to 494 (KTER…HHET). Composition is skewed to polar residues over residues 495–506 (SPSIPSYMQATK) and 544–561 (RITS…SGDK).

The protein belongs to the IQD family. In terms of assembly, binds to multiple calmodulin (CaM) in the presence of Ca(2+) and CaM-like proteins.

It localises to the nucleus. Its subcellular location is the nucleus envelope. The protein localises to the cytoplasm. It is found in the cytoskeleton. The protein resides in the cell membrane. May be involved in cooperative interactions with calmodulins or calmodulin-like proteins. Recruits calmodulin proteins to microtubules, thus being a potential scaffold in cellular signaling and trafficking. May associate with nucleic acids and regulate gene expression at the transcriptional or post-transcriptional level. This chain is Protein IQ-DOMAIN 31, found in Arabidopsis thaliana (Mouse-ear cress).